The chain runs to 348 residues: Dihydroorotase (348 aa).

Zn(2+)-binding residues include histidine 14 and histidine 16. Substrate is bound by residues 16 to 18 (HLR) and asparagine 42. Residues lysine 100, histidine 137, and histidine 175 each contribute to the Zn(2+) site. Residue lysine 100 is modified to N6-carboxylysine. Position 137 (histidine 137) interacts with substrate. Leucine 220 is a substrate binding site. Aspartate 248 provides a ligand contact to Zn(2+). The active site involves aspartate 248. Residues histidine 252 and alanine 264 each contribute to the substrate site.

It belongs to the metallo-dependent hydrolases superfamily. DHOase family. Class II DHOase subfamily. In terms of assembly, homodimer. Requires Zn(2+) as cofactor.

It carries out the reaction (S)-dihydroorotate + H2O = N-carbamoyl-L-aspartate + H(+). It functions in the pathway pyrimidine metabolism; UMP biosynthesis via de novo pathway; (S)-dihydroorotate from bicarbonate: step 3/3. Functionally, catalyzes the reversible cyclization of carbamoyl aspartate to dihydroorotate. This chain is Dihydroorotase, found in Pseudomonas fluorescens (strain SBW25).